Reading from the N-terminus, the 130-residue chain is Phosphoribosyl-AMP cyclohydrolase (130 aa).

D80 contributes to the Mg(2+) binding site. Position 81 (C81) interacts with Zn(2+). Positions 82 and 84 each coordinate Mg(2+). Zn(2+)-binding residues include C98 and C105.

It belongs to the PRA-CH family. Homodimer. Requires Mg(2+) as cofactor. It depends on Zn(2+) as a cofactor.

The protein resides in the cytoplasm. The catalysed reaction is 1-(5-phospho-beta-D-ribosyl)-5'-AMP + H2O = 1-(5-phospho-beta-D-ribosyl)-5-[(5-phospho-beta-D-ribosylamino)methylideneamino]imidazole-4-carboxamide. It functions in the pathway amino-acid biosynthesis; L-histidine biosynthesis; L-histidine from 5-phospho-alpha-D-ribose 1-diphosphate: step 3/9. Functionally, catalyzes the hydrolysis of the adenine ring of phosphoribosyl-AMP. In Oleidesulfovibrio alaskensis (strain ATCC BAA-1058 / DSM 17464 / G20) (Desulfovibrio alaskensis), this protein is Phosphoribosyl-AMP cyclohydrolase.